The sequence spans 140 residues: Phosphoribosyl-AMP cyclohydrolase (140 aa).

Aspartate 78 serves as a coordination point for Mg(2+). Cysteine 79 lines the Zn(2+) pocket. Mg(2+)-binding residues include aspartate 80 and aspartate 82. Residues cysteine 96 and cysteine 103 each contribute to the Zn(2+) site.

The protein belongs to the PRA-CH family. As to quaternary structure, homodimer. Requires Mg(2+) as cofactor. Zn(2+) serves as cofactor.

The protein localises to the cytoplasm. The catalysed reaction is 1-(5-phospho-beta-D-ribosyl)-5'-AMP + H2O = 1-(5-phospho-beta-D-ribosyl)-5-[(5-phospho-beta-D-ribosylamino)methylideneamino]imidazole-4-carboxamide. Its pathway is amino-acid biosynthesis; L-histidine biosynthesis; L-histidine from 5-phospho-alpha-D-ribose 1-diphosphate: step 3/9. In terms of biological role, catalyzes the hydrolysis of the adenine ring of phosphoribosyl-AMP. The polypeptide is Phosphoribosyl-AMP cyclohydrolase (Ralstonia nicotianae (strain ATCC BAA-1114 / GMI1000) (Ralstonia solanacearum)).